The chain runs to 505 residues: Trans-cinnamate 4-monooxygenase (505 aa).

Residues 3 to 23 traverse the membrane as a helical segment; sequence LLLLEKTLLGLFLAAVVAIVV. Residues 213–218 and Ala306 each bind (E)-cinnamate; that span reads RSRLAQ. Residue Cys447 participates in heme binding.

The protein belongs to the cytochrome P450 family. Requires heme as cofactor.

It localises to the membrane. The enzyme catalyses (E)-cinnamate + reduced [NADPH--hemoprotein reductase] + O2 = (E)-4-coumarate + oxidized [NADPH--hemoprotein reductase] + H2O + H(+). Its pathway is phenylpropanoid metabolism; trans-4-coumarate biosynthesis; trans-4-coumarate from trans-cinnamate: step 1/1. In terms of biological role, catalyzes the first oxidative step of the phenylpropanoid pathway in higher plants by transforming trans-cinnamate into p-coumarate. The compounds formed by this pathway are essential components for lignification, pollination, and defense against ultraviolet light, predators and pathogens. This Vigna radiata var. radiata (Mung bean) protein is Trans-cinnamate 4-monooxygenase (CYP73A2).